A 197-amino-acid polypeptide reads, in one-letter code: Ribonuclease HII (197 aa).

The 189-residue stretch at 9–197 (ELIAGVDEVG…APVKKALEQF (189 aa)) folds into the RNase H type-2 domain. A divalent metal cation is bound by residues D15, E16, and D107.

It belongs to the RNase HII family. It depends on Mn(2+) as a cofactor. Mg(2+) is required as a cofactor.

The protein resides in the cytoplasm. It carries out the reaction Endonucleolytic cleavage to 5'-phosphomonoester.. Endonuclease that specifically degrades the RNA of RNA-DNA hybrids. This is Ribonuclease HII from Haemophilus influenzae (strain 86-028NP).